Here is a 213-residue protein sequence, read N- to C-terminus: Orotate phosphoribosyltransferase (213 aa).

Residue lysine 26 coordinates 5-phospho-alpha-D-ribose 1-diphosphate. An orotate-binding site is contributed by phenylalanine 34–phenylalanine 35. 5-phospho-alpha-D-ribose 1-diphosphate contacts are provided by residues tyrosine 72–lysine 73, arginine 99, lysine 100, lysine 103, histidine 105, and aspartate 124–alanine 132. Orotate contacts are provided by threonine 128 and arginine 156.

It belongs to the purine/pyrimidine phosphoribosyltransferase family. PyrE subfamily. As to quaternary structure, homodimer. It depends on Mg(2+) as a cofactor.

The enzyme catalyses orotidine 5'-phosphate + diphosphate = orotate + 5-phospho-alpha-D-ribose 1-diphosphate. The protein operates within pyrimidine metabolism; UMP biosynthesis via de novo pathway; UMP from orotate: step 1/2. Its function is as follows. Catalyzes the transfer of a ribosyl phosphate group from 5-phosphoribose 1-diphosphate to orotate, leading to the formation of orotidine monophosphate (OMP). The chain is Orotate phosphoribosyltransferase from Salmonella typhi.